The chain runs to 863 residues: NACHT, LRR and PYD domains-containing protein 4B (863 aa).

One can recognise a Pyrin domain in the interval 1–93 (MASLFSDFGF…TNRATGEIAA (93 aa)). The NACHT domain maps to 143–466 (KMVVLQGVAG…FYLLHSEMDH (324 aa)). 149–156 (GVAGIGKT) contacts ATP. 7 LRR repeats span residues 618–643 (WHQI…IFNE), 683–706 (SYNL…MLCD), 717–740 (ILDL…LRQN), 741–763 (KSLR…ALCR), 765–782 (LTLP…ACQL), 797–824 (YKCL…AMKD), and 843–863 (SQEF…ENGV).

This sequence belongs to the NLRP family.

May be involved in inflammation and recognition of cytosolic pathogen-associated molecular patterns (PAMPs) not intercepted by membrane-bound receptors. The chain is NACHT, LRR and PYD domains-containing protein 4B (Nlrp4b) from Mus musculus (Mouse).